A 287-amino-acid chain; its full sequence is ATP synthase gamma chain (287 aa).

Belongs to the ATPase gamma chain family. As to quaternary structure, F-type ATPases have 2 components, CF(1) - the catalytic core - and CF(0) - the membrane proton channel. CF(1) has five subunits: alpha(3), beta(3), gamma(1), delta(1), epsilon(1). CF(0) has three main subunits: a, b and c.

It localises to the cell inner membrane. Produces ATP from ADP in the presence of a proton gradient across the membrane. The gamma chain is believed to be important in regulating ATPase activity and the flow of protons through the CF(0) complex. The chain is ATP synthase gamma chain from Yersinia pestis.